The chain runs to 383 residues: MAINLFTSESVSEGHPDKIADQISDAVLDEILKQDPKARVACETYVKTGMALVGGEITTSAWVDIENLTRQVICDIGYTHSDMGFDAHSCAVLNAIGKQSPDINQGVDRADPLEQGAGDQGIMFGYATNETEVLMPAPITYAHRLMEQQAKVRKSGKLDWLRPDAKSQLTFAYENNKIVGIDAVVLSTQHAEHVSQKDLVEGVMEEIIKPVLPSEWLSQNTKYFINPTGRFVIGGPMGDCGLTGRKIIVDTYGGAARHGGGAFSGKDPSKVDRSAAYAARYVAKNIVAAGLADRCEIQLSYAIGVADPTSIMVETFGTGKVSNETLVKLIYQNFDLRPYGLIKMLDLIRPIYRETAAYGHFGREHFPWEQTDKAEALRAGAGL.

Residue His15 coordinates ATP. Asp17 lines the Mg(2+) pocket. Glu43 is a binding site for K(+). The L-methionine site is built by Glu56 and Gln99. The interval 99–109 (QSPDINQGVDR) is flexible loop. ATP contacts are provided by residues 164-166 (DAK), 230-231 (RF), Asp239, 245-246 (RK), Ala262, and Lys266. Residue Asp239 coordinates L-methionine. Lys270 is a binding site for L-methionine.

It belongs to the AdoMet synthase family. As to quaternary structure, homotetramer; dimer of dimers. Mg(2+) is required as a cofactor. The cofactor is K(+).

It localises to the cytoplasm. It carries out the reaction L-methionine + ATP + H2O = S-adenosyl-L-methionine + phosphate + diphosphate. It functions in the pathway amino-acid biosynthesis; S-adenosyl-L-methionine biosynthesis; S-adenosyl-L-methionine from L-methionine: step 1/1. Functionally, catalyzes the formation of S-adenosylmethionine (AdoMet) from methionine and ATP. The overall synthetic reaction is composed of two sequential steps, AdoMet formation and the subsequent tripolyphosphate hydrolysis which occurs prior to release of AdoMet from the enzyme. This is S-adenosylmethionine synthase from Actinobacillus pleuropneumoniae serotype 7 (strain AP76).